A 396-amino-acid chain; its full sequence is Elongation factor Tu (396 aa).

The region spanning 10 to 206 is the tr-type G domain; the sequence is KAHVNIGTIG…AVDEYIPDPV (197 aa). A G1 region spans residues 19–26; that stretch reads GHVDHGKT. 19-26 is a binding site for GTP; it reads GHVDHGKT. T26 contributes to the Mg(2+) binding site. A G2 region spans residues 62 to 66; sequence GITIN. The G3 stretch occupies residues 83–86; it reads DAPG. GTP-binding positions include 83–87 and 138–141; these read DAPGH and NKSD. Positions 138–141 are G4; it reads NKSD. Residues 176–178 form a G5 region; that stretch reads SAL.

The protein belongs to the TRAFAC class translation factor GTPase superfamily. Classic translation factor GTPase family. EF-Tu/EF-1A subfamily. Monomer.

Its subcellular location is the cytoplasm. The catalysed reaction is GTP + H2O = GDP + phosphate + H(+). In terms of biological role, GTP hydrolase that promotes the GTP-dependent binding of aminoacyl-tRNA to the A-site of ribosomes during protein biosynthesis. The protein is Elongation factor Tu of Micrococcus luteus (Micrococcus lysodeikticus).